The sequence spans 323 residues: 4-hydroxy-3-methylbut-2-enyl diphosphate reductase (323 aa).

Cysteine 13 is a binding site for [4Fe-4S] cluster. The (2E)-4-hydroxy-3-methylbut-2-enyl diphosphate site is built by histidine 42 and histidine 75. Dimethylallyl diphosphate contacts are provided by histidine 42 and histidine 75. Histidine 42 and histidine 75 together coordinate isopentenyl diphosphate. Cysteine 97 is a binding site for [4Fe-4S] cluster. Residue histidine 125 coordinates (2E)-4-hydroxy-3-methylbut-2-enyl diphosphate. Histidine 125 lines the dimethylallyl diphosphate pocket. Residue histidine 125 coordinates isopentenyl diphosphate. Residue glutamate 127 is the Proton donor of the active site. Threonine 168 contacts (2E)-4-hydroxy-3-methylbut-2-enyl diphosphate. Cysteine 198 lines the [4Fe-4S] cluster pocket. The (2E)-4-hydroxy-3-methylbut-2-enyl diphosphate site is built by serine 226, serine 227, asparagine 228, and serine 270. The dimethylallyl diphosphate site is built by serine 226, serine 227, asparagine 228, and serine 270. Serine 226, serine 227, asparagine 228, and serine 270 together coordinate isopentenyl diphosphate.

Belongs to the IspH family. Requires [4Fe-4S] cluster as cofactor.

It carries out the reaction isopentenyl diphosphate + 2 oxidized [2Fe-2S]-[ferredoxin] + H2O = (2E)-4-hydroxy-3-methylbut-2-enyl diphosphate + 2 reduced [2Fe-2S]-[ferredoxin] + 2 H(+). The enzyme catalyses dimethylallyl diphosphate + 2 oxidized [2Fe-2S]-[ferredoxin] + H2O = (2E)-4-hydroxy-3-methylbut-2-enyl diphosphate + 2 reduced [2Fe-2S]-[ferredoxin] + 2 H(+). It functions in the pathway isoprenoid biosynthesis; dimethylallyl diphosphate biosynthesis; dimethylallyl diphosphate from (2E)-4-hydroxy-3-methylbutenyl diphosphate: step 1/1. It participates in isoprenoid biosynthesis; isopentenyl diphosphate biosynthesis via DXP pathway; isopentenyl diphosphate from 1-deoxy-D-xylulose 5-phosphate: step 6/6. In terms of biological role, catalyzes the conversion of 1-hydroxy-2-methyl-2-(E)-butenyl 4-diphosphate (HMBPP) into a mixture of isopentenyl diphosphate (IPP) and dimethylallyl diphosphate (DMAPP). Acts in the terminal step of the DOXP/MEP pathway for isoprenoid precursor biosynthesis. This chain is 4-hydroxy-3-methylbut-2-enyl diphosphate reductase, found in Nitrosomonas europaea (strain ATCC 19718 / CIP 103999 / KCTC 2705 / NBRC 14298).